The following is a 291-amino-acid chain: Acetyl-coenzyme A carboxylase carboxyl transferase subunit beta (291 aa).

In terms of domain architecture, CoA carboxyltransferase N-terminal spans 34–291 (MWTKCSNCNN…LILHGVNKYE (258 aa)). Zn(2+) contacts are provided by Cys38, Cys41, Cys57, and Cys60. The C4-type zinc-finger motif lies at 38-60 (CSNCNNMIYYEDLENNKYVCTKC).

This sequence belongs to the AccD/PCCB family. As to quaternary structure, acetyl-CoA carboxylase is a heterohexamer composed of biotin carboxyl carrier protein (AccB), biotin carboxylase (AccC) and two subunits each of ACCase subunit alpha (AccA) and ACCase subunit beta (AccD). The cofactor is Zn(2+).

It is found in the cytoplasm. It catalyses the reaction N(6)-carboxybiotinyl-L-lysyl-[protein] + acetyl-CoA = N(6)-biotinyl-L-lysyl-[protein] + malonyl-CoA. It functions in the pathway lipid metabolism; malonyl-CoA biosynthesis; malonyl-CoA from acetyl-CoA: step 1/1. Component of the acetyl coenzyme A carboxylase (ACC) complex. Biotin carboxylase (BC) catalyzes the carboxylation of biotin on its carrier protein (BCCP) and then the CO(2) group is transferred by the transcarboxylase to acetyl-CoA to form malonyl-CoA. This Clostridium botulinum (strain Eklund 17B / Type B) protein is Acetyl-coenzyme A carboxylase carboxyl transferase subunit beta.